The following is a 235-amino-acid chain: RNA pyrophosphohydrolase (235 aa).

Residues 6-149 (GFRPNVGIIL…KREVYQLALS (144 aa)) form the Nudix hydrolase domain. The short motif at 38 to 59 (GGIKYGETPEQAMFRELHEEVG) is the Nudix box element. Residues 161–235 (APLSPYGRGG…PDDTAPKDNS (75 aa)) are disordered. Over residues 171–196 (QHRERDGRDARDSRERSSDQGGRNEQ) the composition is skewed to basic and acidic residues. Positions 203–220 (TVTTTTVIVETVSVSAPT) are enriched in low complexity.

This sequence belongs to the Nudix hydrolase family. RppH subfamily. A divalent metal cation is required as a cofactor.

Accelerates the degradation of transcripts by removing pyrophosphate from the 5'-end of triphosphorylated RNA, leading to a more labile monophosphorylated state that can stimulate subsequent ribonuclease cleavage. The chain is RNA pyrophosphohydrolase from Ralstonia pickettii (strain 12J).